The sequence spans 373 residues: Hydrogenase maturation factor HypD (373 aa).

Fe cation is bound by residues C41, C69, and C72.

The protein belongs to the HypD family. In terms of assembly, monomer. Interacts with HypC. Forms a complex with HypC, or HybG, and HypE. [4Fe-4S] cluster is required as a cofactor.

The protein operates within protein modification; [NiFe] hydrogenase maturation. Its function is as follows. Involved in the maturation of [NiFe] hydrogenases. Involved in the biosynthesis of the Fe(CN)(2)CO cofactor. HypD may act as a scaffold on which the Fe(CN)(2)CO cofactor is formed. In complex with HypC, accepts the cyanide ligand generated by HypF and HypE, and also coordinates the carbon monoxide ligand. Required for the formation of all three hydrogenase isoenzymes. The polypeptide is Hydrogenase maturation factor HypD (Escherichia coli (strain K12)).